The sequence spans 74 residues: DNA-directed RNA polymerase subunit omega (74 aa).

It belongs to the RNA polymerase subunit omega family. The RNAP catalytic core consists of 2 alpha, 1 beta, 1 beta' and 1 omega subunit. When a sigma factor is associated with the core the holoenzyme is formed, which can initiate transcription.

The enzyme catalyses RNA(n) + a ribonucleoside 5'-triphosphate = RNA(n+1) + diphosphate. Functionally, promotes RNA polymerase assembly. Latches the N- and C-terminal regions of the beta' subunit thereby facilitating its interaction with the beta and alpha subunits. In Helicobacter pylori (strain P12), this protein is DNA-directed RNA polymerase subunit omega.